Reading from the N-terminus, the 62-residue chain is Photosystem II reaction center protein Z (62 aa).

2 helical membrane-spanning segments follow: residues 8-28 (AVFALIATSSILLISVPVVFA) and 41-61 (FSGTSLWIGLVFLVGILNSLI).

The protein belongs to the PsbZ family. In terms of assembly, PSII is composed of 1 copy each of membrane proteins PsbA, PsbB, PsbC, PsbD, PsbE, PsbF, PsbH, PsbI, PsbJ, PsbK, PsbL, PsbM, PsbT, PsbY, PsbZ, Psb30/Ycf12, at least 3 peripheral proteins of the oxygen-evolving complex and a large number of cofactors. It forms dimeric complexes.

The protein localises to the plastid. It is found in the chloroplast thylakoid membrane. Functionally, may control the interaction of photosystem II (PSII) cores with the light-harvesting antenna, regulates electron flow through the 2 photosystem reaction centers. PSII is a light-driven water plastoquinone oxidoreductase, using light energy to abstract electrons from H(2)O, generating a proton gradient subsequently used for ATP formation. This chain is Photosystem II reaction center protein Z, found in Nymphaea alba (White water-lily).